The primary structure comprises 455 residues: MWLEILLTSVLGFAIYWFISRDKEETLPLEDGWWGPGTRSAAREDDSIRPFKVETSDEEIHDLHQRIDKFRFTPPLEDSCFHYGFNSNYLKKVISYWRNEFDWKKQVEILNRYPHFKTKIEGLDIHFIHVKPPQLPAGHTPKPLLMVHGWPGSFYEFYKIIPLLTDPKNHGLSDEHVFEVICPSIPGYGFSEASSKKGFNSVATARIFYKLMLRLGFQEFYIQGGDWGSLICTNMAQLVPSHVKGLHLNMALVLSNFSTLTLLLGQRFGRFLGLTERDVELLYPVKEKVFYSLMRESGYMHIQCTKPDTVGSALNDSPVGLAAYILEKFSTWTNTEFRYLEDGGLERKFSLDDLLTNVMLYWTTGTIISSQRFYKENLGQGWMTQKHERMKVYVPTGFSAFPFELLHTPEKWVRFKYPKLISYSYMVRGGHFAAFEEPELLAQDIRKFLSVLERQ.

Residues 1–21 (MWLEILLTSVLGFAIYWFISR) traverse the membrane as a helical; Signal-anchor for type III membrane protein segment. Residues 22–455 (DKEETLPLED…RKFLSVLERQ (434 aa)) are Cytoplasmic-facing. D226 serves as the catalytic Nucleophile. The residue at position 295 (R295) is a Dimethylated arginine. Y374 serves as the catalytic Proton donor. H431 serves as the catalytic Proton acceptor.

It belongs to the peptidase S33 family. In terms of tissue distribution, found in liver.

It localises to the microsome membrane. It is found in the endoplasmic reticulum membrane. The catalysed reaction is cis-stilbene oxide + H2O = (1R,2R)-hydrobenzoin. It carries out the reaction 1-(4-methoxyphenyl)-N-methyl-N-[(3-methyloxetan-3-yl)methyl]methanamine + H2O = 2-{[(4-methoxybenzyl)(methyl)amino]methyl}-2-methylpropane-1,3-diol. It catalyses the reaction 8,9-epoxy-(5Z,11Z,14Z)-eicosatrienoate + H2O = 8,9-dihydroxy-(5Z,11Z,14Z)-eicosatrienoate. The enzyme catalyses 11,12-epoxy-(5Z,8Z,14Z)-eicosatrienoate + H2O = 11,12-dihydroxy-(5Z,8Z,14Z)-eicosatrienoate. The catalysed reaction is 2-(5Z,8Z,11Z,14Z-eicosatetraenoyl)-glycerol + H2O = glycerol + (5Z,8Z,11Z,14Z)-eicosatetraenoate + H(+). Inhibited by 10-hydroxystearamide and methoxy-arachidonyl fluorophosphate. Functionally, biotransformation enzyme that catalyzes the hydrolysis of arene and aliphatic epoxides to less reactive and more water soluble dihydrodiols by the trans addition of water. Plays a role in the metabolism of endogenous lipids such as epoxide-containing fatty acids. Metabolizes the abundant endocannabinoid 2-arachidonoylglycerol (2-AG) to free arachidonic acid (AA) and glycerol. Binds 20(S)-hydroxycholesterol (20(S)-OHC). The chain is Epoxide hydrolase 1 from Homo sapiens (Human).